A 100-amino-acid polypeptide reads, in one-letter code: Aspartyl/glutamyl-tRNA(Asn/Gln) amidotransferase subunit C (100 aa).

This sequence belongs to the GatC family. Heterotrimer of A, B and C subunits.

The enzyme catalyses L-glutamyl-tRNA(Gln) + L-glutamine + ATP + H2O = L-glutaminyl-tRNA(Gln) + L-glutamate + ADP + phosphate + H(+). It carries out the reaction L-aspartyl-tRNA(Asn) + L-glutamine + ATP + H2O = L-asparaginyl-tRNA(Asn) + L-glutamate + ADP + phosphate + 2 H(+). In terms of biological role, allows the formation of correctly charged Asn-tRNA(Asn) or Gln-tRNA(Gln) through the transamidation of misacylated Asp-tRNA(Asn) or Glu-tRNA(Gln) in organisms which lack either or both of asparaginyl-tRNA or glutaminyl-tRNA synthetases. The reaction takes place in the presence of glutamine and ATP through an activated phospho-Asp-tRNA(Asn) or phospho-Glu-tRNA(Gln). The sequence is that of Aspartyl/glutamyl-tRNA(Asn/Gln) amidotransferase subunit C from Streptococcus uberis (strain ATCC BAA-854 / 0140J).